Here is a 642-residue protein sequence, read N- to C-terminus: MPVIRFYDGSQQVYEHSVSLIEIIKNKKPSIMKSLIAISVNNHFSNLNTFIREDAFIEFVDQKNYKALNIIRYSCAQLLSYAIKNIWPLAQIATSNIIEDGFYCDIDFKRSISEKDLILLENQMKMLVKREYNILNKLISYSEAREIFQKCFEKYKVSLIDENINCNSKVSLYYHENYADIDIGLQVFNIKFCKYFKLQKIGGVYWKKNKNNKMLQRIYGTAWTNKQELDKHLDYLNELEKRDHRKIGKFLQLYHMQEESPGMIFWHNKGWIIFNELQNFVRVKLKEYKYEEVKTPLLIDKLIWKQSGHWDNYKNAIFTTLSEHREYCIKPMNCPGHVQIFNSRLKSYRDLPIRMAEFGSCHRNEPSGSLHGLMRVRNFTQDDAHIFCTREQVRSEINDCIKMIYDLYSTFHFKKILVKLSTRPEKRIGTDSLWNESEKDLSDMLIENHLSFEYQSGEGAFYGPKIEFILQDSLDRNWQCGTIQLDFYLPLRLSSFYINEKNEKKVPVIIHRAILGSIERFIGILIEECSGNLPTWLSPVQVVIISITDISSGYVKELFKKFSDVNIRIECDLRNEKIGFKIREHTLRRIPYILICGEKESSSKKISVRNRQGHNFGMIDVDFFIKKLQKEIITRNFYQMEE.

The TGS domain occupies methionine 1 to aspartate 61. Residues aspartate 243 to proline 534 are catalytic. The Zn(2+) site is built by cysteine 334, histidine 385, and histidine 511.

Belongs to the class-II aminoacyl-tRNA synthetase family. As to quaternary structure, homodimer. Zn(2+) serves as cofactor.

The protein localises to the cytoplasm. It carries out the reaction tRNA(Thr) + L-threonine + ATP = L-threonyl-tRNA(Thr) + AMP + diphosphate + H(+). Catalyzes the attachment of threonine to tRNA(Thr) in a two-step reaction: L-threonine is first activated by ATP to form Thr-AMP and then transferred to the acceptor end of tRNA(Thr). Also edits incorrectly charged L-seryl-tRNA(Thr). The sequence is that of Threonine--tRNA ligase from Buchnera aphidicola subsp. Acyrthosiphon pisum (strain APS) (Acyrthosiphon pisum symbiotic bacterium).